Consider the following 543-residue polypeptide: MIGIKILVNCALPYANGPLHVGHIAGAYLGADVFVRFNRLIGNEVLYVSGSDEYGTPITVRAEKEGKSPQEIADRYYAEHIETFKKLGINFDIFMRTTYPEHSSVAQEFFLKLLNEGVIEKGTMIAPYCRKIGRFMPDRYIEGECPYCGYKKARGDQCDNCGRTLDPQELINPVCILSGETPEFRETEHFFLRLDLFEERLEEWLKTKTFWKPNVLAYTRNFIQGGLKKRAITRDIDWGVKVPLEGYEHKRIYVWFEALIGYITGAKMFSEVIGKPNYWKEFYFDKDVKNYYFIGKDNIPFHSIIWPAMLLGYGELNLPYDIPANEYLTFKGEQFSKSRGIGYTVDELLRVIPPDYLRYYVASILPETGDSDFSLEELVKTVNSDLIDKYGNFVHRTLSFINKYDLKITKPNSLNDEAFEYAQNAFKEYCDELSQVHIKRSLAIWLNLAIYANSYFNKSEPWNLIKTDRDQCNYKLYVSLKLAQYLTAMIYPFTPTSAKAIWEQLGVNMDIDSSFSILNSINDFSVKPSRIPFEKLDIDKLKL.

The short motif at 13–23 is the 'HIGH' region element; sequence PYANGPLHVGH. Cys145, Cys148, Cys158, and Cys161 together coordinate Zn(2+). The 'KMSKS' region motif lies at 334–338; that stretch reads QFSKS. Lys337 provides a ligand contact to ATP.

The protein belongs to the class-I aminoacyl-tRNA synthetase family. MetG type 1 subfamily. Zn(2+) is required as a cofactor.

It is found in the cytoplasm. The enzyme catalyses tRNA(Met) + L-methionine + ATP = L-methionyl-tRNA(Met) + AMP + diphosphate. Is required not only for elongation of protein synthesis but also for the initiation of all mRNA translation through initiator tRNA(fMet) aminoacylation. The chain is Methionine--tRNA ligase from Thermoplasma volcanium (strain ATCC 51530 / DSM 4299 / JCM 9571 / NBRC 15438 / GSS1).